The primary structure comprises 361 residues: Fructose-bisphosphate aldolase (361 aa).

N-acetylthreonine is present on threonine 2. Substrate-binding residues include arginine 56 and lysine 147. The active-site Proton acceptor is glutamate 188. Residue lysine 230 is the Schiff-base intermediate with dihydroxyacetone-P of the active site.

This sequence belongs to the class I fructose-bisphosphate aldolase family. As to quaternary structure, homotetramer. In terms of tissue distribution, mainly expressed in the heads and partly in the thoraxes of adult flies. As to expression, expressed in all adult tissues. The Alpha-beta mRNA shows strong expression in the abdomens of adults. Mainly expressed in adult abdominal regions and is also expressed in lesser amounts in other parts of the body. The Beta-gamma mRNA is expressed in adult heads.

It catalyses the reaction beta-D-fructose 1,6-bisphosphate = D-glyceraldehyde 3-phosphate + dihydroxyacetone phosphate. The protein operates within carbohydrate degradation; glycolysis; D-glyceraldehyde 3-phosphate and glycerone phosphate from D-glucose: step 4/4. Enzyme of the glycolytic pathway. Glycolysis is essential in glial cells but not in neurons; neurons rely on the citric acid cycle for their energy needs, and on lactate and alanine secreted into the hemolymph by glial cells to fuel it. May take part in developmental stage-specific or tissue -specific sugar-phosphate metabolisms. Protein acts on two substrates fructose 1,6-bisphosphate and fructose 1-phosphate (like other class I aldolases). In Drosophila melanogaster (Fruit fly), this protein is Fructose-bisphosphate aldolase.